Here is a 501-residue protein sequence, read N- to C-terminus: Glycerol kinase (501 aa).

Residue T14 coordinates ADP. T14, T15, and S16 together coordinate ATP. T14 provides a ligand contact to sn-glycerol 3-phosphate. R18 lines the ADP pocket. Residues R84, E85, Y135, and D244 each contribute to the sn-glycerol 3-phosphate site. Glycerol-binding residues include R84, E85, Y135, D244, and Q245. Positions 266 and 309 each coordinate ADP. Residues T266, G309, Q313, and G410 each coordinate ATP. 2 residues coordinate ADP: G410 and N414.

It belongs to the FGGY kinase family.

It carries out the reaction glycerol + ATP = sn-glycerol 3-phosphate + ADP + H(+). The protein operates within polyol metabolism; glycerol degradation via glycerol kinase pathway; sn-glycerol 3-phosphate from glycerol: step 1/1. With respect to regulation, inhibited by fructose 1,6-bisphosphate (FBP). In terms of biological role, key enzyme in the regulation of glycerol uptake and metabolism. Catalyzes the phosphorylation of glycerol to yield sn-glycerol 3-phosphate. The sequence is that of Glycerol kinase from Deinococcus radiodurans (strain ATCC 13939 / DSM 20539 / JCM 16871 / CCUG 27074 / LMG 4051 / NBRC 15346 / NCIMB 9279 / VKM B-1422 / R1).